The primary structure comprises 351 residues: MNPPKSAPDAQGLSYRDAGVDIDAGDALIDKIKPFAKKTLRDGVLGGIGGFGALFEVPKKYKEPVLVSGTDGVGTKLKLAFHLNKHDTVGQDLVAMSVNDILVQGAEPLFFLDYFACGKLDVDTAATVVKGIAQGCELSGCALIGGETAEMPGMYPDGEYDLAGFAVGAVEKSKIIDGSTIAEGDVVLGLASSGIHSNGFSLVRKIIERANPDLSADFHGRSLADALMAPTRIYVKPLLALMQKLSVKGMAHITGGGLVENIPRVLRDGLTAELDQNAWPLPPLFKWLQEHGGVADAEMHRVFNCGIGMAVIVSAADADAAIADLTAAGEQVWKIGTVRATREGEAQTVVV.

The protein belongs to the AIR synthase family.

The protein localises to the cytoplasm. The enzyme catalyses 2-formamido-N(1)-(5-O-phospho-beta-D-ribosyl)acetamidine + ATP = 5-amino-1-(5-phospho-beta-D-ribosyl)imidazole + ADP + phosphate + H(+). Its pathway is purine metabolism; IMP biosynthesis via de novo pathway; 5-amino-1-(5-phospho-D-ribosyl)imidazole from N(2)-formyl-N(1)-(5-phospho-D-ribosyl)glycinamide: step 2/2. The sequence is that of Phosphoribosylformylglycinamidine cyclo-ligase from Burkholderia cenocepacia (strain HI2424).